The chain runs to 342 residues: Protein pelota homolog (342 aa).

Belongs to the eukaryotic release factor 1 family. Pelota subfamily. As to quaternary structure, monomer. The cofactor is a divalent metal cation.

It localises to the cytoplasm. May function in recognizing stalled ribosomes, interact with stem-loop structures in stalled mRNA molecules, and effect endonucleolytic cleavage of the mRNA. May play a role in the release non-functional ribosomes and degradation of damaged mRNAs. Has endoribonuclease activity. This chain is Protein pelota homolog, found in Methanocorpusculum labreanum (strain ATCC 43576 / DSM 4855 / Z).